Here is a 655-residue protein sequence, read N- to C-terminus: Epithelial sodium channel subunit alpha (655 aa).

Topologically, residues 1 to 55 (MTDKEEEAEGGKKKEPMIGFYDSYQELFEFFCNNTTIHGTIRMVCSKHNNMKTVS) are cytoplasmic. Residues 56 to 76 (WTILFITTFGVMYWQFGLLLG) traverse the membrane as a helical segment. The Extracellular segment spans residues 77 to 531 (QYYSYPVSIT…SQWSLWFGSS (455 aa)). Cystine bridges form between Cys-102-Cys-275, Cys-199-Cys-206, Cys-252-Cys-259, Cys-364-Cys-448, Cys-385-Cys-425, Cys-385-Cys-444, Cys-389-Cys-440, Cys-398-Cys-425, Cys-398-Cys-448, and Cys-400-Cys-414. A helical membrane pass occupies residues 532-552 (VLSVVEMGELVFDLIAVGVIV). Residues 553-655 (LRRRRREKCQ…QEASEGPTVL (103 aa)) lie on the Cytoplasmic side of the membrane. Residues 561 to 587 (CQASSDGEGTSDSTAGTHRGQENASRS) form a disordered region. The span at 562–586 (QASSDGEGTSDSTAGTHRGQENASR) shows a compositional bias: polar residues.

The protein belongs to the amiloride-sensitive sodium channel (TC 1.A.6) family. SCNN1A subfamily. As to quaternary structure, heterotrimer; containing an alpha/SCNN1A, a beta/SCNN1B and a gamma/SCNN1G subunit. Strongly expressed in gill, kidney and rectum (at protein level). More weakly expressed in muscle, brain, heart, liver and intestine.

The protein localises to the apical cell membrane. It is found in the cell projection. The protein resides in the cilium. It localises to the cytoplasmic granule. Its subcellular location is the cytoplasm. The protein localises to the cytoplasmic vesicle. It is found in the secretory vesicle. The protein resides in the acrosome. It localises to the flagellum. The enzyme catalyses Na(+)(in) = Na(+)(out). Originally identified and characterized by its inhibition by the diuretic drug amiloride. In terms of biological role, this is one of the three pore-forming subunits of the heterotrimeric epithelial sodium channel (ENaC), a critical regulator of sodium balance and fluid homeostasis. ENaC operates in epithelial tissues, where it mediates the electrodiffusion of sodium ions from extracellular fluid through the apical membrane of cells, with water following osmotically. The chain is Epithelial sodium channel subunit alpha (scnn1a) from Neoceratodus forsteri (Australian lungfish).